The chain runs to 88 residues: Small ribosomal subunit protein bS20 (88 aa).

The protein belongs to the bacterial ribosomal protein bS20 family.

Its function is as follows. Binds directly to 16S ribosomal RNA. This is Small ribosomal subunit protein bS20 from Clostridium kluyveri (strain NBRC 12016).